We begin with the raw amino-acid sequence, 315 residues long: T-box transcription factor tbx-8 (315 aa).

The segment at residues glutamate 11 to glutamate 195 is a DNA-binding region (T-box). A compositionally biased stretch (basic and acidic residues) spans phenylalanine 193 to arginine 203. 2 disordered regions span residues phenylalanine 193–proline 235 and proline 293–valine 315. A compositionally biased stretch (low complexity) spans serine 205 to proline 225. The span at glutamine 305–valine 315 shows a compositional bias: acidic residues.

The protein localises to the nucleus. In terms of biological role, transcription factor. Involved in the control of early morphogenesis of the intestine, hypodermis and body-wall muscle. Involved in regulating expression of vab-7. Appears to have partially redundant function to tbx-9. This chain is T-box transcription factor tbx-8 (tbx-8), found in Caenorhabditis elegans.